The chain runs to 306 residues: Plant-type L-asparaginase (306 aa).

The Nucleophile role is filled by Thr-176. Substrate contacts are provided by residues 203 to 206 and 225 to 228; these read RVGD and TGLG.

This sequence belongs to the Ntn-hydrolase family. As to quaternary structure, heterotetramer of two alpha and two beta chains arranged as a dimer of alpha/beta heterodimers. The uncleaved protein forms homodimers. Autocleaved. Generates the alpha and beta subunits. The N-terminal residue of the beta subunit is thought to be responsible for the nucleophile hydrolase activity. Predominantly produced in the uncleaved form when gene expression is induced at 37 degrees Celsius with 0.5 mM IPTG. When produced at 42 degrees Celsius without adding IPTG, approximately 90% of the protein is found in the cleaved form, while the remaining 10% is observed as uncleaved precursor. Undergoes complete auto-cleavage within 24 hours at 37 degrees Celsius.

The enzyme catalyses L-asparagine + H2O = L-aspartate + NH4(+). Its activity is regulated as follows. Undergoes auto-cleavage in a temperature-dependent and glycine-independent manner. Metal ions and EDTA do not have any significant effect on enzyme activity, indicating that activity is metal-independent. Its function is as follows. Catalyzes the hydrolysis of L-asparagine into L-aspartate and ammonia. Also displays D-asparaginase activity, which is about 10% of the L-asparaginase activity. Does not exhibit glutaminase activity. The chain is Plant-type L-asparaginase from Thermococcus kodakarensis (strain ATCC BAA-918 / JCM 12380 / KOD1) (Pyrococcus kodakaraensis (strain KOD1)).